A 194-amino-acid chain; its full sequence is Peptidyl-tRNA hydrolase (194 aa).

Tyr16 is a tRNA binding site. Residue His21 is the Proton acceptor of the active site. Residues Phe67, Asn69, and Asn115 each coordinate tRNA.

The protein belongs to the PTH family. In terms of assembly, monomer.

It is found in the cytoplasm. It catalyses the reaction an N-acyl-L-alpha-aminoacyl-tRNA + H2O = an N-acyl-L-amino acid + a tRNA + H(+). Its function is as follows. Hydrolyzes ribosome-free peptidyl-tRNAs (with 1 or more amino acids incorporated), which drop off the ribosome during protein synthesis, or as a result of ribosome stalling. Catalyzes the release of premature peptidyl moieties from peptidyl-tRNA molecules trapped in stalled 50S ribosomal subunits, and thus maintains levels of free tRNAs and 50S ribosomes. The chain is Peptidyl-tRNA hydrolase from Shigella boydii serotype 18 (strain CDC 3083-94 / BS512).